The sequence spans 329 residues: MNSMTEQKALELAIKEIEKKFGKETFSQSESFDNQVIKSGSILLDNAIGVGGYPKGKIIEIYGNESSGKTTIALQCVKECIKEGGSVAYIDAECSIDSKYLSHLGIDPTKLLVATPEYGEQAFSIIDALIKTNMVDLIVVDSVAALVPKNDIESSMEDQSMGTHARMMSKGLKILQTSLSKHKTTVIFINQVREKIGVMFGNNEITTGGRALKFFSTLRLDVRRSELIKSGTDVIGIRSKITVTKNKVAPPFKNCFVDIFFNKGFDPTKEIIDFAIEYEIIKKSGSWFYYNETKLAQGRNNLDSYLKENNEIYDEIKKLVFDEIDKNNK.

Residue 63–70 participates in ATP binding; that stretch reads GNESSGKT.

The protein belongs to the RecA family.

The protein localises to the cytoplasm. Can catalyze the hydrolysis of ATP in the presence of single-stranded DNA, the ATP-dependent uptake of single-stranded DNA by duplex DNA, and the ATP-dependent hybridization of homologous single-stranded DNAs. It interacts with LexA causing its activation and leading to its autocatalytic cleavage. In Malacoplasma penetrans (strain HF-2) (Mycoplasma penetrans), this protein is Protein RecA.